Consider the following 511-residue polypeptide: D-alanine--D-alanyl carrier protein ligase (511 aa).

152-153 (TS) contributes to the ATP binding site. Aspartate 199 is a binding site for D-alanine. Residue 294 to 299 (NAYGPT) participates in ATP binding. Residue valine 303 coordinates D-alanine. Residues aspartate 385, 397–400 (YGGR), and lysine 499 each bind ATP. Lysine 499 is a D-alanine binding site.

This sequence belongs to the ATP-dependent AMP-binding enzyme family. DltA subfamily.

The protein resides in the cytoplasm. The enzyme catalyses holo-[D-alanyl-carrier protein] + D-alanine + ATP = D-alanyl-[D-alanyl-carrier protein] + AMP + diphosphate. It participates in cell wall biogenesis; lipoteichoic acid biosynthesis. Catalyzes the first step in the D-alanylation of lipoteichoic acid (LTA), the activation of D-alanine and its transfer onto the D-alanyl carrier protein (Dcp) DltC. In an ATP-dependent two-step reaction, forms a high energy D-alanyl-AMP intermediate, followed by transfer of the D-alanyl residue as a thiol ester to the phosphopantheinyl prosthetic group of the Dcp. D-alanylation of LTA plays an important role in modulating the properties of the cell wall in Gram-positive bacteria, influencing the net charge of the cell wall. This Streptococcus agalactiae serotype V (strain ATCC BAA-611 / 2603 V/R) protein is D-alanine--D-alanyl carrier protein ligase.